The sequence spans 303 residues: Thyrotroph embryonic factor (303 aa).

Disordered regions lie at residues 1-63 (MSDA…KLEE) and 132-176 (ESAS…DPNC). Residue Ser32 is modified to Phosphoserine. Residues 41–61 (KLMENPPREARLDKEKGKEKL) show a composition bias toward basic and acidic residues. Residues 133-160 (SASSSTASPPSSSTAIFQPSETVSSTES) show a composition bias toward low complexity. In terms of domain architecture, bZIP spans 233-296 (DEKYWTRRKK…GKCKTIVSKY (64 aa)). The tract at residues 235 to 255 (KYWTRRKKNNVAAKRSRDARR) is basic motif. Residues 256–263 (LKENQITI) form a leucine-zipper region.

It belongs to the bZIP family. PAR subfamily. Binds DNA as a homodimer or a heterodimer. Can form a heterodimer with DBP.

Its subcellular location is the nucleus. Its function is as follows. Transcription factor that binds to and transactivates the TSHB promoter. Binds to a minimal DNA-binding sequence 5'-[TC][AG][AG]TTA[TC][AG]-3'. This chain is Thyrotroph embryonic factor (TEF), found in Homo sapiens (Human).